Here is a 167-residue protein sequence, read N- to C-terminus: MTAPEEFNEDYTAEDAAVEVVEEDYGYEAEPATYAPVVIDRPVQTVGRRKEAVVRVRLVPGTGQFVLNGRSIEDYFPNKVHQQLVKSPLVTVERTESFDIHARLVGGGPSGQAGALRLAIARALIEVTPEDRPALKRAGFLTRDPRATERKKYGLKKARKAPQYSKR.

The tract at residues 136–167 is disordered; that stretch reads KRAGFLTRDPRATERKKYGLKKARKAPQYSKR. Positions 143 to 152 are enriched in basic and acidic residues; the sequence is RDPRATERKK. Residues 153 to 167 show a composition bias toward basic residues; sequence YGLKKARKAPQYSKR.

The protein belongs to the universal ribosomal protein uS9 family.

This Nocardia farcinica (strain IFM 10152) protein is Small ribosomal subunit protein uS9.